The following is a 380-amino-acid chain: tRNA-specific 2-thiouridylase MnmA (380 aa).

ATP contacts are provided by residues 26-33 (AMSGGVDS) and Leu-52. Cys-120 serves as the catalytic Nucleophile. Cysteines 120 and 217 form a disulfide. Gly-144 contributes to the ATP binding site. The tract at residues 166-168 (RDQ) is interaction with tRNA. Cys-217 serves as the catalytic Cysteine persulfide intermediate.

This sequence belongs to the MnmA/TRMU family.

Its subcellular location is the cytoplasm. The catalysed reaction is S-sulfanyl-L-cysteinyl-[protein] + uridine(34) in tRNA + AH2 + ATP = 2-thiouridine(34) in tRNA + L-cysteinyl-[protein] + A + AMP + diphosphate + H(+). In terms of biological role, catalyzes the 2-thiolation of uridine at the wobble position (U34) of tRNA, leading to the formation of s(2)U34. The protein is tRNA-specific 2-thiouridylase MnmA of Roseobacter denitrificans (strain ATCC 33942 / OCh 114) (Erythrobacter sp. (strain OCh 114)).